The chain runs to 216 residues: Homeobox-leucine zipper protein ATHB-40 (216 aa).

The segment at Gly28–Gly52 is disordered. The segment at residues Gly52–Arg111 is a DNA-binding region (homeobox). Residues Leu112–Leu140 form a leucine-zipper region.

The protein belongs to the HD-ZIP homeobox family. Class I subfamily. As to expression, expressed in roots, flowers and siliques.

It is found in the nucleus. Probable transcription factor. The chain is Homeobox-leucine zipper protein ATHB-40 (ATHB-40) from Arabidopsis thaliana (Mouse-ear cress).